A 525-amino-acid polypeptide reads, in one-letter code: Glutamate--cysteine ligase (525 aa).

Belongs to the glutamate--cysteine ligase type 1 family. Type 1 subfamily.

It carries out the reaction L-cysteine + L-glutamate + ATP = gamma-L-glutamyl-L-cysteine + ADP + phosphate + H(+). It participates in sulfur metabolism; glutathione biosynthesis; glutathione from L-cysteine and L-glutamate: step 1/2. The chain is Glutamate--cysteine ligase from Alcanivorax borkumensis (strain ATCC 700651 / DSM 11573 / NCIMB 13689 / SK2).